A 1309-amino-acid polypeptide reads, in one-letter code: Clustered mitochondria protein homolog (1309 aa).

Positions 1-34 (MLLNGDCPESLKKEAAAAEPPRENGLDEAGPGDE) are disordered. A compositionally biased stretch (basic and acidic residues) spans 9-25 (ESLKKEAAAAEPPRENG). A phosphoserine mark is found at Ser279 and Ser281. Residues 335–577 (RAEDAYTSRL…RTFPPDLNFL (243 aa)) enclose the Clu domain. Polar residues predominate over residues 636-651 (LETPSSLENGGPSSLE). A disordered region spans residues 636-674 (LETPSSLENGGPSSLESKSEDPPGQEAGSEEEGSSASGL). A phosphoserine mark is found at Ser654, Ser664, and Ser723. 4 TPR repeats span residues 978-1011 (AFHFFQSGQAKVQQGFLKEGCELINEALNLFNNV), 1020-1053 (CACLRLLARLHYIMGDYAEALSNQQKAVLMSERV), 1104-1137 (ALLDNNIGLVLHGVMEYDLSLRFLENALAVSTKY), and 1146-1179 (ALSHHLVARVYESKAEFRSALQHEKEGYTIYKTQ). Residues 1264–1278 (HQLQEASRNRDRAEE) are compositionally biased toward basic and acidic residues. Residues 1264-1309 (HQLQEASRNRDRAEEPMATEPAPAGAPGDLGSQPPAAKDPSPSVQG) form a disordered region. Over residues 1279–1290 (PMATEPAPAGAP) the composition is skewed to low complexity.

The protein belongs to the CLU family.

It is found in the cytoplasm. Its subcellular location is the cytoplasmic granule. Functionally, mRNA-binding protein involved in proper cytoplasmic distribution of mitochondria. Specifically binds mRNAs of nuclear-encoded mitochondrial proteins in the cytoplasm and regulates transport or translation of these transcripts close to mitochondria, playing a role in mitochondrial biogenesis. The polypeptide is Clustered mitochondria protein homolog (CLUH) (Homo sapiens (Human)).